The primary structure comprises 227 residues: Cytochrome c oxidase subunit 2 (227 aa).

Residues 1–14 (MAYPMQLGFQDATS) lie on the Mitochondrial intermembrane side of the membrane. The helical transmembrane segment at 15-45 (PIMEELLHFHDHTLMIVFLISSLVLYVISLM) threads the bilayer. Residues 46-59 (LTTKLTHTSTMDAQ) are Mitochondrial matrix-facing. Residues 60–87 (EVETIWTILPAIILILIALPSLRILYMM) form a helical membrane-spanning segment. Topologically, residues 88-227 (DEINNPSLTV…YFEKWSASML (140 aa)) are mitochondrial intermembrane. Cu cation-binding residues include H161, C196, E198, C200, H204, and M207. Residue E198 coordinates Mg(2+).

This sequence belongs to the cytochrome c oxidase subunit 2 family. Component of the cytochrome c oxidase (complex IV, CIV), a multisubunit enzyme composed of 14 subunits. The complex is composed of a catalytic core of 3 subunits MT-CO1, MT-CO2 and MT-CO3, encoded in the mitochondrial DNA, and 11 supernumerary subunits COX4I, COX5A, COX5B, COX6A, COX6B, COX6C, COX7A, COX7B, COX7C, COX8 and NDUFA4, which are encoded in the nuclear genome. The complex exists as a monomer or a dimer and forms supercomplexes (SCs) in the inner mitochondrial membrane with NADH-ubiquinone oxidoreductase (complex I, CI) and ubiquinol-cytochrome c oxidoreductase (cytochrome b-c1 complex, complex III, CIII), resulting in different assemblies (supercomplex SCI(1)III(2)IV(1) and megacomplex MCI(2)III(2)IV(2)). Found in a complex with TMEM177, COA6, COX18, COX20, SCO1 and SCO2. Interacts with TMEM177 in a COX20-dependent manner. Interacts with COX20. Interacts with COX16. Cu cation is required as a cofactor.

It is found in the mitochondrion inner membrane. The catalysed reaction is 4 Fe(II)-[cytochrome c] + O2 + 8 H(+)(in) = 4 Fe(III)-[cytochrome c] + 2 H2O + 4 H(+)(out). Component of the cytochrome c oxidase, the last enzyme in the mitochondrial electron transport chain which drives oxidative phosphorylation. The respiratory chain contains 3 multisubunit complexes succinate dehydrogenase (complex II, CII), ubiquinol-cytochrome c oxidoreductase (cytochrome b-c1 complex, complex III, CIII) and cytochrome c oxidase (complex IV, CIV), that cooperate to transfer electrons derived from NADH and succinate to molecular oxygen, creating an electrochemical gradient over the inner membrane that drives transmembrane transport and the ATP synthase. Cytochrome c oxidase is the component of the respiratory chain that catalyzes the reduction of oxygen to water. Electrons originating from reduced cytochrome c in the intermembrane space (IMS) are transferred via the dinuclear copper A center (CU(A)) of subunit 2 and heme A of subunit 1 to the active site in subunit 1, a binuclear center (BNC) formed by heme A3 and copper B (CU(B)). The BNC reduces molecular oxygen to 2 water molecules using 4 electrons from cytochrome c in the IMS and 4 protons from the mitochondrial matrix. The sequence is that of Cytochrome c oxidase subunit 2 (MT-CO2) from Gazella spekei (Speke's gazelle).